A 394-amino-acid polypeptide reads, in one-letter code: Elongation factor Tu (394 aa).

The region spanning 10-204 (KPHVNVGTIG…ALDTYIPEPE (195 aa)) is the tr-type G domain. The G1 stretch occupies residues 19–26 (GHVDHGKT). GTP is bound at residue 19 to 26 (GHVDHGKT). Thr-26 lines the Mg(2+) pocket. The G2 stretch occupies residues 60–64 (GITIN). Residues 81–84 (DCPG) form a G3 region. GTP contacts are provided by residues 81–85 (DCPGH) and 136–139 (NKCD). Positions 136 to 139 (NKCD) are G4. The segment at 174–176 (SAL) is G5.

This sequence belongs to the TRAFAC class translation factor GTPase superfamily. Classic translation factor GTPase family. EF-Tu/EF-1A subfamily. Monomer.

The protein localises to the cytoplasm. The catalysed reaction is GTP + H2O = GDP + phosphate + H(+). GTP hydrolase that promotes the GTP-dependent binding of aminoacyl-tRNA to the A-site of ribosomes during protein biosynthesis. This is Elongation factor Tu from Shewanella sediminis (strain HAW-EB3).